Consider the following 90-residue polypeptide: MARSIWKGPFVDLHLLRKAEGAQDSGARAPIKTWSRRSTILPQFVGLTFNVYNGRKFVPVSVSEEMVGHKLGEFAPTRYFPGHADKKGKR.

Belongs to the universal ribosomal protein uS19 family.

Functionally, protein S19 forms a complex with S13 that binds strongly to the 16S ribosomal RNA. The chain is Small ribosomal subunit protein uS19 from Rhizorhabdus wittichii (strain DSM 6014 / CCUG 31198 / JCM 15750 / NBRC 105917 / EY 4224 / RW1) (Sphingomonas wittichii).